A 1499-amino-acid polypeptide reads, in one-letter code: Streptococcal surface protein B (1499 aa).

Residues 1–37 (MQKREVFGFRKSKVAKTLCGAVLGAALIAIADQQVLA) form the signal peptide. Residues 50–84 (AVTTTGNPATNLPEAQGEATEAASQSQAQAGSKDG) form a disordered region. Ag I/II A repeat units follow at residues 145 to 219 (KKTT…QKAN), 220 to 301 (EDSQ…KKAK), 302 to 383 (EDND…KQAN), and 384 to 465 (ATNE…KKDF). Disordered stretches follow at residues 689–709 (YADSSNAEKSRGARWDTSEWD), 763–907 (TAPT…TPPV), and 1409–1472 (RTTT…TGTN). Residues 694-705 (NAEKSRGARWDT) are compositionally biased toward basic and acidic residues. The span at 789-799 (PTPPVKTPDQP) shows a compositional bias: pro residues. The segment covering 800 to 815 (EPSKPEEPTYETEKPL) has biased composition (basic and acidic residues). Residues 828–838 (PTPPVKIPDQP) are compositionally biased toward pro residues. The span at 839–854 (EPSKPEEPTYETEKPL) shows a compositional bias: basic and acidic residues. 2 stretches are compositionally biased toward pro residues: residues 867–877 (PTPPVKTPDQP) and 888–907 (DPLPTPPLAPTPKQLPTPPV). Over residues 1428–1450 (KPKDPDKPETPKEPKVPSPKVED) the composition is skewed to basic and acidic residues. The LPXTG sorting signal signature appears at 1466–1470 (LPKTG). T1469 carries the post-translational modification Pentaglycyl murein peptidoglycan amidated threonine. The propeptide at 1470 to 1499 (GTNDATYMPYLGLAALVGFLGLGLAKRKED) is removed by sortase.

It belongs to the antigen I/II family.

It is found in the secreted. It localises to the cell wall. The protein resides in the cell surface. Adhesin that mediates binding of bacteria to a variety of host cells. Plays a role in the bacterial invasion of dentinal tubules. A host immunostimulatory component, it modulates the innate immunity response. Plays a protective role against some antibiotics and cationic antimicrobial peptides (histatin-5, HTN3, but not beta-defensin 4A, DEFB4A). This Streptococcus gordonii (strain Challis / ATCC 35105 / BCRC 15272 / CH1 / DL1 / V288) protein is Streptococcal surface protein B.